A 485-amino-acid polypeptide reads, in one-letter code: Mitochondria-eating protein (485 aa).

Positions 112–210 (TSHERELNEV…SILSSESSIL (99 aa)) form a coiled coil. Low complexity-rich tracts occupy residues 214 to 241 (LSRS…SPTS) and 471 to 485 (RSRS…TPRF). Disordered regions lie at residues 214-244 (LSRS…SAKL) and 451-485 (RSRS…TPRF).

It belongs to the MIEAP family.

The protein resides in the cytoplasm. It is found in the mitochondrion outer membrane. The protein localises to the mitochondrion matrix. Key regulator of mitochondrial quality that mediates the repairing or degradation of unhealthy mitochondria in response to mitochondrial damage. Mediator of mitochondrial protein catabolic process (also named MALM) by mediating the degradation of damaged proteins inside mitochondria by promoting the accumulation in the mitochondrial matrix of hydrolases that are characteristic of the lysosomal lumen. Also involved in mitochondrion degradation of damaged mitochondria by promoting the formation of vacuole-like structures (named MIV), which engulf and degrade unhealthy mitochondria by accumulating lysosomes. Binds cardiolipin. May form molecular condensates (non-membrane-bounded organelles) within mitochondria that compartmentalize and promote cardiolipin metabolism. This Xenopus laevis (African clawed frog) protein is Mitochondria-eating protein (spata18).